A 20-amino-acid polypeptide reads, in one-letter code: Unknown protein NF019 from 2D-PAGE (20 aa).

This Naegleria fowleri (Brain eating amoeba) protein is Unknown protein NF019 from 2D-PAGE.